Here is a 427-residue protein sequence, read N- to C-terminus: Serine--tRNA ligase (427 aa).

Residue 229–231 (TAE) coordinates L-serine. 260-262 (RSE) contributes to the ATP binding site. An L-serine-binding site is contributed by E283. 347-350 (EISS) contributes to the ATP binding site. Residue S383 coordinates L-serine.

The protein belongs to the class-II aminoacyl-tRNA synthetase family. Type-1 seryl-tRNA synthetase subfamily. In terms of assembly, homodimer. The tRNA molecule binds across the dimer.

Its subcellular location is the cytoplasm. The catalysed reaction is tRNA(Ser) + L-serine + ATP = L-seryl-tRNA(Ser) + AMP + diphosphate + H(+). It carries out the reaction tRNA(Sec) + L-serine + ATP = L-seryl-tRNA(Sec) + AMP + diphosphate + H(+). It participates in aminoacyl-tRNA biosynthesis; selenocysteinyl-tRNA(Sec) biosynthesis; L-seryl-tRNA(Sec) from L-serine and tRNA(Sec): step 1/1. In terms of biological role, catalyzes the attachment of serine to tRNA(Ser). Is also able to aminoacylate tRNA(Sec) with serine, to form the misacylated tRNA L-seryl-tRNA(Sec), which will be further converted into selenocysteinyl-tRNA(Sec). This Oleidesulfovibrio alaskensis (strain ATCC BAA-1058 / DSM 17464 / G20) (Desulfovibrio alaskensis) protein is Serine--tRNA ligase.